The following is a 432-amino-acid chain: Glutamate-1-semialdehyde 2,1-aminomutase (432 aa).

At lysine 270 the chain carries N6-(pyridoxal phosphate)lysine.

Belongs to the class-III pyridoxal-phosphate-dependent aminotransferase family. HemL subfamily. In terms of assembly, homodimer. Pyridoxal 5'-phosphate is required as a cofactor.

The protein localises to the cytoplasm. It carries out the reaction (S)-4-amino-5-oxopentanoate = 5-aminolevulinate. It participates in porphyrin-containing compound metabolism; protoporphyrin-IX biosynthesis; 5-aminolevulinate from L-glutamyl-tRNA(Glu): step 2/2. The protein is Glutamate-1-semialdehyde 2,1-aminomutase of Acinetobacter baumannii (strain ATCC 17978 / DSM 105126 / CIP 53.77 / LMG 1025 / NCDC KC755 / 5377).